Here is a 64-residue protein sequence, read N- to C-terminus: uncharacterized protein (64 aa).

This is an uncharacterized protein from Escherichia coli (strain K12).